Reading from the N-terminus, the 227-residue chain is tRNA (guanine-N(7)-)-methyltransferase (227 aa).

A disordered region spans residues 1-21 (MPDMTMKSQPDRLYGRQRGHA). Positions 54, 79, 114, and 136 each coordinate S-adenosyl-L-methionine. Asp-136 is an active-site residue. Substrate is bound by residues Lys-140, Asp-172, and 206-209 (TRYE).

Belongs to the class I-like SAM-binding methyltransferase superfamily. TrmB family.

The enzyme catalyses guanosine(46) in tRNA + S-adenosyl-L-methionine = N(7)-methylguanosine(46) in tRNA + S-adenosyl-L-homocysteine. Its pathway is tRNA modification; N(7)-methylguanine-tRNA biosynthesis. Its function is as follows. Catalyzes the formation of N(7)-methylguanine at position 46 (m7G46) in tRNA. This chain is tRNA (guanine-N(7)-)-methyltransferase, found in Granulibacter bethesdensis (strain ATCC BAA-1260 / CGDNIH1).